Here is a 54-residue protein sequence, read N- to C-terminus: Large ribosomal subunit protein bL33B (54 aa).

The protein belongs to the bacterial ribosomal protein bL33 family.

The polypeptide is Large ribosomal subunit protein bL33B (Saccharopolyspora erythraea (strain ATCC 11635 / DSM 40517 / JCM 4748 / NBRC 13426 / NCIMB 8594 / NRRL 2338)).